A 138-amino-acid polypeptide reads, in one-letter code: Putative pre-16S rRNA nuclease (138 aa).

It belongs to the YqgF nuclease family.

The protein localises to the cytoplasm. Its function is as follows. Could be a nuclease involved in processing of the 5'-end of pre-16S rRNA. The protein is Putative pre-16S rRNA nuclease of Karelsulcia muelleri (strain GWSS) (Sulcia muelleri).